A 458-amino-acid chain; its full sequence is Phosphoglucosamine mutase (458 aa).

The active-site Phosphoserine intermediate is Ser-102. Ser-102, Asp-252, Asp-254, and Asp-256 together coordinate Mg(2+). Ser-102 bears the Phosphoserine mark.

This sequence belongs to the phosphohexose mutase family. The cofactor is Mg(2+). Post-translationally, activated by phosphorylation.

It catalyses the reaction alpha-D-glucosamine 1-phosphate = D-glucosamine 6-phosphate. Functionally, catalyzes the conversion of glucosamine-6-phosphate to glucosamine-1-phosphate. The sequence is that of Phosphoglucosamine mutase from Anaeromyxobacter dehalogenans (strain 2CP-C).